A 141-amino-acid chain; its full sequence is Small ribosomal subunit protein bS16 (141 aa).

Polar residues-rich tracts occupy residues 89–101 (NVSV…TEAI) and 109–129 (ATAN…TATI). The interval 89 to 141 (NVSVSHAESTEAITNAEPIQATANTESNEVSDSESTATATIRESEEQPPISES) is disordered.

This sequence belongs to the bacterial ribosomal protein bS16 family.

In Trichodesmium erythraeum (strain IMS101), this protein is Small ribosomal subunit protein bS16.